A 356-amino-acid chain; its full sequence is NADH-quinone oxidoreductase subunit H (356 aa).

The next 8 membrane-spanning stretches (helical) occupy residues 4–24, 79–99, 127–147, 166–186, 198–218, 251–271, 289–309, and 329–349; these read ALIL…LTGV, LLAP…IPFG, GVLY…IAGW, ISYE…TGSL, MWNI…TAMF, FFLA…LLFF, FIGL…FIWV, and MIPW…YWKE.

Belongs to the complex I subunit 1 family. In terms of assembly, NDH-1 is composed of 14 different subunits. Subunits NuoA, H, J, K, L, M, N constitute the membrane sector of the complex.

The protein resides in the cell inner membrane. It catalyses the reaction a quinone + NADH + 5 H(+)(in) = a quinol + NAD(+) + 4 H(+)(out). In terms of biological role, NDH-1 shuttles electrons from NADH, via FMN and iron-sulfur (Fe-S) centers, to quinones in the respiratory chain. The immediate electron acceptor for the enzyme in this species is believed to be ubiquinone. Couples the redox reaction to proton translocation (for every two electrons transferred, four hydrogen ions are translocated across the cytoplasmic membrane), and thus conserves the redox energy in a proton gradient. This subunit may bind ubiquinone. This chain is NADH-quinone oxidoreductase subunit H, found in Leptospira biflexa serovar Patoc (strain Patoc 1 / ATCC 23582 / Paris).